A 557-amino-acid polypeptide reads, in one-letter code: Inositol-3-phosphate synthase 1 (557 aa).

21 residues coordinate NAD(+): G67, G68, N69, N70, D141, S177, V178, Q188, R191, T228, A229, N230, T231, G278, S279, D303, S306, N337, N338, D339, and K352. A Phosphoserine modification is found at S279. S357 carries the post-translational modification Phosphoserine. Residues G390, D391, D419, and S420 each coordinate NAD(+). Residues 514 to 557 (GIKPEEVKATSPLPCKKESTPATNGCTGDANGHTQAPTPELSTA) form a disordered region. Position 524 is a phosphoserine (S524). The segment covering 533 to 557 (TPATNGCTGDANGHTQAPTPELSTA) has biased composition (polar residues).

Belongs to the myo-inositol 1-phosphate synthase family. As to quaternary structure, homotrimer. NAD(+) serves as cofactor. Post-translationally, phosphorylation at Ser-524 does not appear to affect enzyme activity, and is detected in brain and testis. As to expression, expressed in testis, brain and epididymis (at protein level). Moderately expressed in brain, lung, liver, and kidney. Low expression in heart and spleen. Very low expression in skeletal muscle. Expressed in testis, spleen, heart, brainstem, hippocampus, cerebellum, cortex and amygdala. Absent or very lowly expressed in intestine, lung and muscle. In terms of tissue distribution, expressed in intestine, lung, liver, muscle, testis, spleen, brainstem, hippocampus, cerebellum, cortex and amygdala. Absent or lowly expressed in heart and kidney. As to expression, expressed in intestine (at protein level).

Its subcellular location is the cytoplasm. It carries out the reaction D-glucose 6-phosphate = 1D-myo-inositol 3-phosphate. Its pathway is polyol metabolism; myo-inositol biosynthesis; myo-inositol from D-glucose 6-phosphate: step 1/2. With respect to regulation, inhibited by 2-deoxyglucitol 6-phosphate (dgtolP) and 2-deoxy-D-glucose 6-phosphate. Inhibited by copper, mercury, cadmium, zinc and copper ions. Activated by potassium and ammonium ions. In terms of biological role, key enzyme in myo-inositol biosynthesis pathway that catalyzes the conversion of glucose 6-phosphate to 1-myo-inositol 1-phosphate in a NAD-dependent manner. Rate-limiting enzyme in the synthesis of all inositol-containing compounds. Key enzyme in myo-inositol biosynthesis pathway that catalyzes the conversion of glucose 6-phosphate to 1-myo-inositol 1-phosphate in a NAD-dependent manner. Functionally, competitively inhibits the function of isoform 1, presumably by competing for NAD cofactor. The polypeptide is Inositol-3-phosphate synthase 1 (Isyna1) (Rattus norvegicus (Rat)).